The following is a 229-amino-acid chain: Demethylmenaquinone methyltransferase (229 aa).

S-adenosyl-L-methionine contacts are provided by residues Thr-57, Asp-77, and 101-102 (DV).

Belongs to the class I-like SAM-binding methyltransferase superfamily. MenG/UbiE family.

The catalysed reaction is a 2-demethylmenaquinol + S-adenosyl-L-methionine = a menaquinol + S-adenosyl-L-homocysteine + H(+). The protein operates within quinol/quinone metabolism; menaquinone biosynthesis; menaquinol from 1,4-dihydroxy-2-naphthoate: step 2/2. Methyltransferase required for the conversion of demethylmenaquinol (DMKH2) to menaquinol (MKH2). This Chlamydia trachomatis serovar A (strain ATCC VR-571B / DSM 19440 / HAR-13) protein is Demethylmenaquinone methyltransferase.